The sequence spans 497 residues: Probable pectinesterase 30 (497 aa).

A signal peptide spans 1-21; the sequence is MLVKVFSFFILMIIMVIGVSK. Residues N238 and N254 are each glycosylated (N-linked (GlcNAc...) asparagine). T263 is a binding site for substrate. The Proton donor role is filled by D316. A disulfide bridge connects residues C330 and C350. The active-site Nucleophile is the D337. A glycan (N-linked (GlcNAc...) asparagine) is linked at N385. 2 residues coordinate substrate: R403 and W405.

It belongs to the pectinesterase family. As to expression, expressed in siliques.

It localises to the secreted. It is found in the cell wall. It carries out the reaction [(1-&gt;4)-alpha-D-galacturonosyl methyl ester](n) + n H2O = [(1-&gt;4)-alpha-D-galacturonosyl](n) + n methanol + n H(+). The protein operates within glycan metabolism; pectin degradation; 2-dehydro-3-deoxy-D-gluconate from pectin: step 1/5. Functionally, acts in the modification of cell walls via demethylesterification of cell wall pectin. The protein is Probable pectinesterase 30 (PME30) of Arabidopsis thaliana (Mouse-ear cress).